A 201-amino-acid chain; its full sequence is MAGAKIGIFGGSFNPVHLGHLVLAREAFWQAKLNQVIFIPAKIPPHKKEGVISEQHRFQMLRLALKKYPEFSVSNIEFLRDKPSYTFDTVEELKLLYPHDELYFITGADGLLEITGWYRGEELLKKIPIIAVSRAGVSKEVFLNQVQYLKNRYRAQIIVVEMPEIGISSSLIRQRIREKLPYSHLIPVEVYDYIVANNLYR.

Belongs to the NadD family.

It carries out the reaction nicotinate beta-D-ribonucleotide + ATP + H(+) = deamido-NAD(+) + diphosphate. It participates in cofactor biosynthesis; NAD(+) biosynthesis; deamido-NAD(+) from nicotinate D-ribonucleotide: step 1/1. Catalyzes the reversible adenylation of nicotinate mononucleotide (NaMN) to nicotinic acid adenine dinucleotide (NaAD). The polypeptide is Probable nicotinate-nucleotide adenylyltransferase (Carboxydothermus hydrogenoformans (strain ATCC BAA-161 / DSM 6008 / Z-2901)).